The following is a 311-amino-acid chain: Lipoyl synthase (311 aa).

Residues Cys47, Cys52, Cys58, Cys73, Cys77, Cys80, and Ser286 each coordinate [4Fe-4S] cluster. Positions 59-276 (WSRHTATYLA…RSVGESLGLF (218 aa)) constitute a Radical SAM core domain.

Belongs to the radical SAM superfamily. Lipoyl synthase family. Requires [4Fe-4S] cluster as cofactor.

The protein resides in the cytoplasm. The catalysed reaction is [[Fe-S] cluster scaffold protein carrying a second [4Fe-4S](2+) cluster] + N(6)-octanoyl-L-lysyl-[protein] + 2 oxidized [2Fe-2S]-[ferredoxin] + 2 S-adenosyl-L-methionine + 4 H(+) = [[Fe-S] cluster scaffold protein] + N(6)-[(R)-dihydrolipoyl]-L-lysyl-[protein] + 4 Fe(3+) + 2 hydrogen sulfide + 2 5'-deoxyadenosine + 2 L-methionine + 2 reduced [2Fe-2S]-[ferredoxin]. The protein operates within protein modification; protein lipoylation via endogenous pathway; protein N(6)-(lipoyl)lysine from octanoyl-[acyl-carrier-protein]: step 2/2. Its function is as follows. Catalyzes the radical-mediated insertion of two sulfur atoms into the C-6 and C-8 positions of the octanoyl moiety bound to the lipoyl domains of lipoate-dependent enzymes, thereby converting the octanoylated domains into lipoylated derivatives. In Chlamydia trachomatis serovar D (strain ATCC VR-885 / DSM 19411 / UW-3/Cx), this protein is Lipoyl synthase.